The sequence spans 507 residues: Trigger factor (507 aa).

Residues 162-243 (GDFVSLDLSA…VRGVKEKELP (82 aa)) enclose the PPIase FKBP-type domain. The disordered stretch occupies residues 434 to 507 (NLPRRPSGEA…DSELPASETK (74 aa)). Over residues 442-460 (EAEDDVRDISDELDAEELE) the composition is skewed to acidic residues. Residues 461-488 (VPAAAPSAEVTAAAGDEATATATATDAD) show a composition bias toward low complexity.

It belongs to the FKBP-type PPIase family. Tig subfamily.

Its subcellular location is the cytoplasm. It catalyses the reaction [protein]-peptidylproline (omega=180) = [protein]-peptidylproline (omega=0). Its function is as follows. Involved in protein export. Acts as a chaperone by maintaining the newly synthesized protein in an open conformation. Functions as a peptidyl-prolyl cis-trans isomerase. The polypeptide is Trigger factor (Parafrankia sp. (strain EAN1pec)).